The primary structure comprises 746 residues: Rhizobactin receptor (746 aa).

Positions 1-26 are cleaved as a signal peptide; the sequence is MGNNENGGISFCVFVVVIGFGTGAVA. Residues 40 to 47 carry the TonB box motif; the sequence is EEIVVTGG. In terms of domain architecture, TBDR plug spans 52 to 163; the sequence is QISEIARTIY…TGGIINIITK (112 aa). In terms of domain architecture, TBDR beta-barrel spans 169–746; the sequence is EPGLHAEVTG…TFAVSLTKVF (578 aa). The TonB C-terminal box signature appears at 729-746; it reads FDYKGRGRTFAVSLTKVF.

The protein belongs to the TonB-dependent receptor family.

It localises to the cell outer membrane. Receptor for the siderophore rhizobactin. The protein is Rhizobactin receptor (rhtA) of Rhizobium meliloti (strain 1021) (Ensifer meliloti).